Reading from the N-terminus, the 222-residue chain is N-(5'-phosphoribosyl)anthranilate isomerase (222 aa).

Belongs to the TrpF family.

It carries out the reaction N-(5-phospho-beta-D-ribosyl)anthranilate = 1-(2-carboxyphenylamino)-1-deoxy-D-ribulose 5-phosphate. It participates in amino-acid biosynthesis; L-tryptophan biosynthesis; L-tryptophan from chorismate: step 3/5. This chain is N-(5'-phosphoribosyl)anthranilate isomerase, found in Prosthecochloris aestuarii (strain DSM 271 / SK 413).